A 92-amino-acid chain; its full sequence is Small ribosomal subunit protein uS19 (92 aa).

The protein belongs to the universal ribosomal protein uS19 family.

In terms of biological role, protein S19 forms a complex with S13 that binds strongly to the 16S ribosomal RNA. The chain is Small ribosomal subunit protein uS19 from Thermosynechococcus vestitus (strain NIES-2133 / IAM M-273 / BP-1).